Consider the following 437-residue polypeptide: Branched-chain amino acid transport system 2 carrier protein (437 aa).

Transmembrane regions (helical) follow at residues 9–29 (LLAL…IIFP), 43–63 (AAFG…VALA), 80–100 (AGVA…ATPR), 117–137 (GGVP…FLVL), 149–169 (VITP…IFAP), 192–212 (GYLT…ATAI), 228–248 (MIAG…LFYL), 280–300 (LLLA…LITA), 308–328 (LLPV…LLVA), 335–355 (LISL…VLIA), 369–389 (VFVP…LGAA), and 404–424 (LADQ…LAVV).

Belongs to the branched chain amino acid transporter family.

The protein resides in the cell inner membrane. Functionally, component of the LIV-II transport system for branched-chain amino acids. BraB is specific for isoleucine, leucine and valine. The LIV-II transport system is coupled to sodium and lithium ions. This is Branched-chain amino acid transport system 2 carrier protein (braB) from Pseudomonas aeruginosa (strain ATCC 15692 / DSM 22644 / CIP 104116 / JCM 14847 / LMG 12228 / 1C / PRS 101 / PAO1).